Here is a 265-residue protein sequence, read N- to C-terminus: Undecaprenyl-diphosphatase 1 (265 aa).

7 helical membrane-spanning segments follow: residues 4–24 (IIIA…PISS), 42–62 (AKTF…ILYH), 84–104 (FHVF…HDVI), 108–128 (LFQP…MILA), 184–204 (SEFS…LDLL), 217–237 (MFAV…VTFL), and 245–265 (LKPF…FVLL).

The protein belongs to the UppP family.

Its subcellular location is the cell membrane. It carries out the reaction di-trans,octa-cis-undecaprenyl diphosphate + H2O = di-trans,octa-cis-undecaprenyl phosphate + phosphate + H(+). In terms of biological role, catalyzes the dephosphorylation of undecaprenyl diphosphate (UPP). Confers resistance to bacitracin. This chain is Undecaprenyl-diphosphatase 1, found in Bacillus cereus (strain ZK / E33L).